The following is a 128-amino-acid chain: Large ribosomal subunit protein bL17 (128 aa).

This sequence belongs to the bacterial ribosomal protein bL17 family. In terms of assembly, part of the 50S ribosomal subunit. Contacts protein L32.

This chain is Large ribosomal subunit protein bL17, found in Tolumonas auensis (strain DSM 9187 / NBRC 110442 / TA 4).